The primary structure comprises 420 residues: Serine hydroxymethyltransferase (420 aa).

(6S)-5,6,7,8-tetrahydrofolate contacts are provided by residues L121 and 125–127 (GHL). K230 bears the N6-(pyridoxal phosphate)lysine mark. Residues E246 and 354–356 (SPF) each bind (6S)-5,6,7,8-tetrahydrofolate.

Belongs to the SHMT family. As to quaternary structure, homodimer. The cofactor is pyridoxal 5'-phosphate.

It localises to the cytoplasm. It carries out the reaction (6R)-5,10-methylene-5,6,7,8-tetrahydrofolate + glycine + H2O = (6S)-5,6,7,8-tetrahydrofolate + L-serine. Its pathway is one-carbon metabolism; tetrahydrofolate interconversion. It functions in the pathway amino-acid biosynthesis; glycine biosynthesis; glycine from L-serine: step 1/1. Functionally, catalyzes the reversible interconversion of serine and glycine with tetrahydrofolate (THF) serving as the one-carbon carrier. This reaction serves as the major source of one-carbon groups required for the biosynthesis of purines, thymidylate, methionine, and other important biomolecules. Also exhibits THF-independent aldolase activity toward beta-hydroxyamino acids, producing glycine and aldehydes, via a retro-aldol mechanism. In Rickettsia prowazekii (strain Madrid E), this protein is Serine hydroxymethyltransferase.